The sequence spans 595 residues: DNA primase (595 aa).

The CHC2-type zinc finger occupies 38–62 (CPFHQEKTPSFTVSNSKRFFYCFGC). Positions 250-332 (NHSILVEGYF…EKKISFIRLP (83 aa)) constitute a Toprim domain. Residues E256, D300, and D302 each coordinate Mg(2+).

This sequence belongs to the DnaG primase family. In terms of assembly, monomer. Interacts with DnaB. It depends on Zn(2+) as a cofactor. Mg(2+) serves as cofactor.

The enzyme catalyses ssDNA + n NTP = ssDNA/pppN(pN)n-1 hybrid + (n-1) diphosphate.. RNA polymerase that catalyzes the synthesis of short RNA molecules used as primers for DNA polymerase during DNA replication. The sequence is that of DNA primase from Rickettsia conorii (strain ATCC VR-613 / Malish 7).